A 215-amino-acid chain; its full sequence is Protein Syd (215 aa).

It belongs to the Syd family.

The protein localises to the cell inner membrane. Interacts with the SecY protein in vivo. May bind preferentially to an uncomplexed state of SecY, thus functioning either as a chelating agent for excess SecY in the cell or as a regulatory factor that negatively controls the translocase function. The polypeptide is Protein Syd (Shewanella amazonensis (strain ATCC BAA-1098 / SB2B)).